The following is an 800-amino-acid chain: Internalin A (800 aa).

A signal peptide spans 1-35 (MRKKRYVWLKSILVAILVFGSGVWINTSNGTNAQA). The 41-residue stretch at 36–76 (ATITQDTPINQIFTDTALAEKMKTVLGKTNVTDTVSQTDLD) folds into the LRRNT domain. LRR repeat units lie at residues 77–98 (QVTT…EYLN), 99–120 (NLTQ…KNLT), 121–142 (KLVD…ANLT), 143–164 (NLTG…KNLT), 165–186 (NLNR…SGLT), 187–207 (SLQQ…ANLT), 208–229 (TLER…AKLT), 230–251 (NLES…GILT), 252–273 (NLDE…ASLT), 274–295 (NLTD…SGLT), 296–317 (KLTE…AGLT), 318–339 (ALTN…SNLK), 340–361 (NLTY…SSLT), 362–383 (KLQR…ANLT), and 384–405 (NINW…ANLT). The LRRCT domain maps to 416-505 (AWTNAPVNYK…AIFNVKFHVD (90 aa)). The stretch at 518-587 (LLTEPAKPVK…TTSQTVDYQG (70 aa)) is one B-1 repeat. Positions 518 to 706 (LLTEPAKPVK…ITLYAQFTKN (189 aa)) are 3 X approximate tandem repeats, type B. The B-2 repeat unit spans residues 588–657 (LLQEPTAPTK…STTQAVDYQG (70 aa)). The B-3 repeat unit spans residues 658-706 (LLKEPKAPTKAGYTFKGWYDEKTDGKKWDFATDKMPANDITLYAQFTKN). The segment at 705 to 757 (KNPVAPPTTGGNTPPTTNNGGNTTPPSANIPGSDTSNTSTGNSASTTSTMNAY) is disordered. The span at 711 to 753 (PTTGGNTPPTTNNGGNTTPPSANIPGSDTSNTSTGNSASTTST) shows a compositional bias: low complexity. Residues 767 to 771 (LPTTG) carry the LPXTG sorting signal motif. A Pentaglycyl murein peptidoglycan amidated threonine modification is found at threonine 770. The propeptide at 771–800 (GDSDNALYLLLGLLAVGTAMALTKKARASK) is removed by sortase A.

The protein belongs to the internalin family. Interacts with host (human) cadherin-1 (CDH1). The formation of the complex between inlA and cadherin-1 is calcium-dependent. Mutagenesis studies show it is possible to increase the affinity of InlA for CDH1 by rational engineering of InlA residues.

The protein localises to the secreted. It localises to the cell wall. With respect to regulation, bacterial uptake is inhibited by EDTA and by anti-E-cadherin antibodies. Its function is as follows. Mediates the entry of L.monocytogenes into host intestinal epithelial cells; transformation with inlA alone allows L.innocua (a non-invasive species) to be taken up by host cells. Binds to human receptor cadherin-1 (E-cadherin, CDH1); the chicken homolog of cadherin-1 but not cadherin-2 function as receptors. Mouse cadherin-1 is not a receptor, however mutating a single surface-exposed residue (Glu-172 to Pro in mouse) allows cadherin-1 to act as a receptor for InlA. The chain is Internalin A from Listeria monocytogenes serovar 1/2a (strain ATCC BAA-679 / EGD-e).